We begin with the raw amino-acid sequence, 162 residues long: L-amino acid N-acetyltransferase AaaT (162 aa).

One can recognise an N-acetyltransferase domain in the interval 4 to 162 (IVIRHAETRD…VDAYYMARVK (159 aa)).

This sequence belongs to the acetyltransferase family.

It catalyses the reaction L-phenylalanine + acetyl-CoA = N-acetyl-L-phenylalanine + CoA + H(+). The enzyme catalyses L-methionine + acetyl-CoA = N-acetyl-L-methionine + CoA + H(+). Functionally, catalyzes the N-acetylation of L-phenylalanine and L-methionine using acetyl-CoA as acetyl donor in vitro. Cannot accept L-tyrosine as substrate and propionyl-CoA, succinyl-CoA or (S)-methylmalonyl-CoA as acyl donors. Is also able to acetylate and thus detoxify several nonhydrolyzable aminoacyl adenylates, but not the processed form of the peptide-nucleotide antibiotic microcin C (McC). When overproduced, provides complete resistance to leucyl sulfamoyl adenylate (LSA) and partial resistance to alanyl sulfamoyl adenylate (ASA) and phenylalanyl sulfamoyl adenylate (FSA). Therefore, may protect bacteria from various toxic aminoacyl nucleotides, either exogenous or those generated inside the cell during normal metabolism. This is L-amino acid N-acetyltransferase AaaT from Escherichia coli (strain K12).